A 627-amino-acid polypeptide reads, in one-letter code: DNA mismatch repair protein MutL (627 aa).

Residues 376-404 (APASTNEVREGSAARAGNYQPPEPPSREA) form a disordered region.

The protein belongs to the DNA mismatch repair MutL/HexB family.

In terms of biological role, this protein is involved in the repair of mismatches in DNA. It is required for dam-dependent methyl-directed DNA mismatch repair. May act as a 'molecular matchmaker', a protein that promotes the formation of a stable complex between two or more DNA-binding proteins in an ATP-dependent manner without itself being part of a final effector complex. The protein is DNA mismatch repair protein MutL of Aeromonas salmonicida (strain A449).